Consider the following 92-residue polypeptide: Small ribosomal subunit protein uS19 (92 aa).

Belongs to the universal ribosomal protein uS19 family.

Its function is as follows. Protein S19 forms a complex with S13 that binds strongly to the 16S ribosomal RNA. The chain is Small ribosomal subunit protein uS19 from Methylobacterium nodulans (strain LMG 21967 / CNCM I-2342 / ORS 2060).